Here is a 215-residue protein sequence, read N- to C-terminus: 3-isopropylmalate dehydratase small subunit (215 aa).

Belongs to the LeuD family. LeuD type 1 subfamily. Heterodimer of LeuC and LeuD.

The enzyme catalyses (2R,3S)-3-isopropylmalate = (2S)-2-isopropylmalate. Its pathway is amino-acid biosynthesis; L-leucine biosynthesis; L-leucine from 3-methyl-2-oxobutanoate: step 2/4. Functionally, catalyzes the isomerization between 2-isopropylmalate and 3-isopropylmalate, via the formation of 2-isopropylmaleate. This Hahella chejuensis (strain KCTC 2396) protein is 3-isopropylmalate dehydratase small subunit.